A 188-amino-acid polypeptide reads, in one-letter code: UPF0157 protein VC_A0354 (188 aa).

Belongs to the UPF0157 (GrpB) family.

The polypeptide is UPF0157 protein VC_A0354 (Vibrio cholerae serotype O1 (strain ATCC 39315 / El Tor Inaba N16961)).